Here is a 391-residue protein sequence, read N- to C-terminus: Elongation factor Tu (391 aa).

The region spanning 10–201 (KPHVNIGTIG…EVDNYIPTPE (192 aa)) is the tr-type G domain. The segment at 19–26 (GHVDHGKT) is G1. 19–26 (GHVDHGKT) lines the GTP pocket. T26 contributes to the Mg(2+) binding site. A G2 region spans residues 55–59 (GITIS). The interval 76-79 (DCPG) is G3. GTP is bound by residues 76 to 80 (DCPGH) and 131 to 134 (NKVD). The interval 131–134 (NKVD) is G4. The interval 169–171 (SAL) is G5.

This sequence belongs to the TRAFAC class translation factor GTPase superfamily. Classic translation factor GTPase family. EF-Tu/EF-1A subfamily. In terms of assembly, monomer.

The protein resides in the cytoplasm. It catalyses the reaction GTP + H2O = GDP + phosphate + H(+). Its function is as follows. GTP hydrolase that promotes the GTP-dependent binding of aminoacyl-tRNA to the A-site of ribosomes during protein biosynthesis. The polypeptide is Elongation factor Tu (Bartonella henselae (strain ATCC 49882 / DSM 28221 / CCUG 30454 / Houston 1) (Rochalimaea henselae)).